Here is a 66-residue protein sequence, read N- to C-terminus: Beta-toxin Cb1 (66 aa).

In terms of domain architecture, LCN-type CS-alpha/beta spans 1–66; that stretch reads KEGYIVNHST…VWPLPKKTCN (66 aa). 4 disulfides stabilise this stretch: Cys-12/Cys-65, Cys-16/Cys-41, Cys-25/Cys-46, and Cys-29/Cys-48.

This sequence belongs to the long (4 C-C) scorpion toxin superfamily. Sodium channel inhibitor family. Beta subfamily. Expressed by the venom gland.

Its subcellular location is the secreted. Inhibited by human antibodies scFvs 10FG2 and LR. In terms of biological role, beta toxins bind voltage-independently at site-4 of sodium channels (Nav) and reduces peak current and shifts the voltage of activation toward more negative potentials thereby affecting sodium channel activation and promoting spontaneous and repetitive firing. Has an inhibitory effect on voltage-gated sodium channel hNav1.6/SCN8A, affecting both the activation and inactivation processes. This toxin is active against mammals and lethal to mice. This Centruroides baergi (Scorpion) protein is Beta-toxin Cb1.